The sequence spans 475 residues: 3-isopropylmalate dehydratase large subunit (475 aa).

[4Fe-4S] cluster is bound by residues cysteine 352, cysteine 412, and cysteine 415.

It belongs to the aconitase/IPM isomerase family. LeuC type 1 subfamily. As to quaternary structure, heterodimer of LeuC and LeuD. The cofactor is [4Fe-4S] cluster.

It catalyses the reaction (2R,3S)-3-isopropylmalate = (2S)-2-isopropylmalate. Its pathway is amino-acid biosynthesis; L-leucine biosynthesis; L-leucine from 3-methyl-2-oxobutanoate: step 2/4. Its function is as follows. Catalyzes the isomerization between 2-isopropylmalate and 3-isopropylmalate, via the formation of 2-isopropylmaleate. The sequence is that of 3-isopropylmalate dehydratase large subunit from Gluconobacter oxydans (strain 621H) (Gluconobacter suboxydans).